We begin with the raw amino-acid sequence, 264 residues long: Thymidylate synthase (264 aa).

Arginine 21 is a dUMP binding site. Histidine 51 is a binding site for (6R)-5,10-methylene-5,6,7,8-tetrahydrofolate. A dUMP-binding site is contributed by 126 to 127 (RR). The active-site Nucleophile is the cysteine 146. Residues 166-169 (RSCD), asparagine 177, and 207-209 (HLY) each bind dUMP. Residue aspartate 169 participates in (6R)-5,10-methylene-5,6,7,8-tetrahydrofolate binding. Residue alanine 263 participates in (6R)-5,10-methylene-5,6,7,8-tetrahydrofolate binding.

Belongs to the thymidylate synthase family. Bacterial-type ThyA subfamily. Homodimer.

Its subcellular location is the cytoplasm. The enzyme catalyses dUMP + (6R)-5,10-methylene-5,6,7,8-tetrahydrofolate = 7,8-dihydrofolate + dTMP. The protein operates within pyrimidine metabolism; dTTP biosynthesis. In terms of biological role, catalyzes the reductive methylation of 2'-deoxyuridine-5'-monophosphate (dUMP) to 2'-deoxythymidine-5'-monophosphate (dTMP) while utilizing 5,10-methylenetetrahydrofolate (mTHF) as the methyl donor and reductant in the reaction, yielding dihydrofolate (DHF) as a by-product. This enzymatic reaction provides an intracellular de novo source of dTMP, an essential precursor for DNA biosynthesis. The sequence is that of Thymidylate synthase from Enterobacter sp. (strain 638).